A 503-amino-acid chain; its full sequence is Aromatase (503 aa).

The next 3 helical transmembrane spans lie at 19 to 39 (EVMP…LLVW), 51 to 71 (GYCM…MGIG), and 303 to 323 (MLIA…FLIA). Substrate-binding residues include Asp-309 and Met-374. Cys-437 contributes to the heme binding site.

It belongs to the cytochrome P450 family. Requires heme as cofactor.

The protein localises to the endoplasmic reticulum membrane. Its subcellular location is the microsome membrane. It catalyses the reaction testosterone + 3 reduced [NADPH--hemoprotein reductase] + 3 O2 = 17beta-estradiol + formate + 3 oxidized [NADPH--hemoprotein reductase] + 4 H2O + 4 H(+). The enzyme catalyses androst-4-ene-3,17-dione + 3 reduced [NADPH--hemoprotein reductase] + 3 O2 = estrone + formate + 3 oxidized [NADPH--hemoprotein reductase] + 4 H2O + 4 H(+). The catalysed reaction is androst-4-ene-3,17-dione + reduced [NADPH--hemoprotein reductase] + O2 = 19-hydroxyandrost-4-ene-3,17-dione + oxidized [NADPH--hemoprotein reductase] + H2O + H(+). It carries out the reaction 19-hydroxyandrost-4-ene-3,17-dione + reduced [NADPH--hemoprotein reductase] + O2 = 19-oxo-androst-4-ene-3,17-dione + oxidized [NADPH--hemoprotein reductase] + 2 H2O + H(+). It catalyses the reaction 19-oxo-androst-4-ene-3,17-dione + reduced [NADPH--hemoprotein reductase] + O2 = estrone + formate + oxidized [NADPH--hemoprotein reductase] + H2O + 2 H(+). The enzyme catalyses estrone + reduced [NADPH--hemoprotein reductase] + O2 = 2-hydroxyestrone + oxidized [NADPH--hemoprotein reductase] + H2O + H(+). The catalysed reaction is 17beta-hydroxy-5alpha-androstan-3-one + reduced [NADPH--hemoprotein reductase] + O2 = 17beta,19-dihydroxy-3-oxo-5alpha-androstanone + oxidized [NADPH--hemoprotein reductase] + H2O + H(+). It carries out the reaction 17beta,19-dihydroxy-3-oxo-5alpha-androstanone + reduced [NADPH--hemoprotein reductase] + O2 = 17beta-hydroxy-3,19-dioxo-5alpha-androstanone + oxidized [NADPH--hemoprotein reductase] + 2 H2O + H(+). It catalyses the reaction 17beta-hydroxy-3,19-dioxo-5alpha-androstanone + reduced [NADPH--hemoprotein reductase] + O2 = 17beta-hydroxy-3-oxo-19-nor-5alpha-androst-1-ene + formate + oxidized [NADPH--hemoprotein reductase] + H2O + 2 H(+). It participates in steroid hormone biosynthesis. In terms of biological role, a cytochrome P450 monooxygenase that catalyzes the conversion of C19 androgens, androst-4-ene-3,17-dione (androstenedione) and testosterone to the C18 estrogens, estrone and estradiol, respectively. Catalyzes three successive oxidations of C19 androgens: two conventional oxidations at C19 yielding 19-hydroxy and 19-oxo/19-aldehyde derivatives, followed by a third oxidative aromatization step that involves C1-beta hydrogen abstraction combined with cleavage of the C10-C19 bond to yield a phenolic A ring and formic acid. Alternatively, the third oxidative reaction yields a 19-norsteroid and formic acid. Converts dihydrotestosterone to delta1,10-dehydro 19-nordihydrotestosterone and may play a role in homeostasis of this potent androgen. Also displays 2-hydroxylase activity toward estrone. Mechanistically, uses molecular oxygen inserting one oxygen atom into a substrate, and reducing the second into a water molecule, with two electrons provided by NADPH via cytochrome P450 reductase (CPR; NADPH-ferrihemoprotein reductase). This chain is Aromatase (CYP19A1), found in Canis lupus familiaris (Dog).